The sequence spans 384 residues: DNA repair protein RAD51 homolog 2 (384 aa).

The segment at M1 to S75 is interaction with RAD51C. Residue G108–T115 participates in ATP binding.

Belongs to the RecA family. RAD51 subfamily. In terms of assembly, part of the BCDX2 complex consisting of RAD51B, RAD51C, RAD51D and XRCC2; the complex has a ring-like structure arranged into a flat disc around a central channel. The BCDX2 subcomplex RAD51B:RAD51C interacts with RAD51. Interacts with SWSAP1; involved in homologous recombination repair. Interacts with HELQ. Post-translationally, phosphorylated on tyrosine residues by BCR-ABL. Expressed in a wide range of tissues.

It localises to the nucleus. Involved in the homologous recombination repair (HRR) pathway of double-stranded DNA breaks arising during DNA replication or induced by DNA-damaging agents. May promote the assembly of presynaptic RAD51 nucleoprotein filaments. Binds single-stranded DNA and double-stranded DNA and has DNA-dependent ATPase activity. Part of the RAD51 paralog protein complex BCDX2 which acts in the BRCA1-BRCA2-dependent HR pathway. Upon DNA damage, BCDX2 acts downstream of BRCA2 recruitment and upstream of RAD51 recruitment. BCDX2 binds predominantly to the intersection of the four duplex arms of the Holliday junction and to junction of replication forks. The BCDX2 complex was originally reported to bind single-stranded DNA, single-stranded gaps in duplex DNA and specifically to nicks in duplex DNA. The BCDX2 subcomplex RAD51B:RAD51C exhibits single-stranded DNA-dependent ATPase activity suggesting an involvement in early stages of the HR pathway. The chain is DNA repair protein RAD51 homolog 2 (RAD51B) from Homo sapiens (Human).